We begin with the raw amino-acid sequence, 100 residues long: Transcription elongation factor A protein-like 7 (100 aa).

The span at 1-32 (MQKPCKENEGKPKCSVPKREEKRPYGEFERQQ) shows a compositional bias: basic and acidic residues. Positions 1-34 (MQKPCKENEGKPKCSVPKREEKRPYGEFERQQTE) are disordered. The stretch at 60–88 (EEMTREGDEMERCLEEIRGLRKKFRALHS) forms a coiled coil.

The protein belongs to the TFS-II family. TFA subfamily. Highly expressed in normal and fetal brain tissues, and weakly expressed in uterus and ovary. Down-regulated in epithelial ovarian, cervical, prostate, breast, brain and lung cancer cell lines and in brain and ovarian tumors.

The protein resides in the nucleus. In terms of biological role, plays a role in the negative regulation of NF-kappa-B signaling at the basal level by modulating transcriptional activity of NF-kappa-B on its target gene promoters. Associates with cyclin D1 promoter containing Myc E-box sequence and transcriptionally represses cyclin D1 expression. Regulates telomerase reverse transcriptase expression and telomerase activity in both ALT (alternative lengthening of telomeres)and telomerase-positive cell lines. This chain is Transcription elongation factor A protein-like 7 (TCEAL7), found in Homo sapiens (Human).